A 226-amino-acid chain; its full sequence is Thiamine-phosphate synthase (226 aa).

4-amino-2-methyl-5-(diphosphooxymethyl)pyrimidine-binding positions include glutamine 46–lysine 50 and asparagine 87. Residues aspartate 88 and aspartate 107 each contribute to the Mg(2+) site. Serine 126 lines the 4-amino-2-methyl-5-(diphosphooxymethyl)pyrimidine pocket. Position 152-154 (threonine 152–threonine 154) interacts with 2-[(2R,5Z)-2-carboxy-4-methylthiazol-5(2H)-ylidene]ethyl phosphate. A 4-amino-2-methyl-5-(diphosphooxymethyl)pyrimidine-binding site is contributed by lysine 155. A 2-[(2R,5Z)-2-carboxy-4-methylthiazol-5(2H)-ylidene]ethyl phosphate-binding site is contributed by glycine 183.

Belongs to the thiamine-phosphate synthase family. Mg(2+) is required as a cofactor.

The enzyme catalyses 2-[(2R,5Z)-2-carboxy-4-methylthiazol-5(2H)-ylidene]ethyl phosphate + 4-amino-2-methyl-5-(diphosphooxymethyl)pyrimidine + 2 H(+) = thiamine phosphate + CO2 + diphosphate. It carries out the reaction 2-(2-carboxy-4-methylthiazol-5-yl)ethyl phosphate + 4-amino-2-methyl-5-(diphosphooxymethyl)pyrimidine + 2 H(+) = thiamine phosphate + CO2 + diphosphate. It catalyses the reaction 4-methyl-5-(2-phosphooxyethyl)-thiazole + 4-amino-2-methyl-5-(diphosphooxymethyl)pyrimidine + H(+) = thiamine phosphate + diphosphate. Its pathway is cofactor biosynthesis; thiamine diphosphate biosynthesis; thiamine phosphate from 4-amino-2-methyl-5-diphosphomethylpyrimidine and 4-methyl-5-(2-phosphoethyl)-thiazole: step 1/1. Functionally, condenses 4-methyl-5-(beta-hydroxyethyl)thiazole monophosphate (THZ-P) and 2-methyl-4-amino-5-hydroxymethyl pyrimidine pyrophosphate (HMP-PP) to form thiamine monophosphate (TMP). The protein is Thiamine-phosphate synthase of Mycobacterium sp. (strain JLS).